A 202-amino-acid chain; its full sequence is Peptidyl-tRNA hydrolase (202 aa).

Residue Y14 participates in tRNA binding. The Proton acceptor role is filled by H19. Residues Y64, N66, and N112 each coordinate tRNA.

This sequence belongs to the PTH family. As to quaternary structure, monomer.

It localises to the cytoplasm. It carries out the reaction an N-acyl-L-alpha-aminoacyl-tRNA + H2O = an N-acyl-L-amino acid + a tRNA + H(+). Its function is as follows. Hydrolyzes ribosome-free peptidyl-tRNAs (with 1 or more amino acids incorporated), which drop off the ribosome during protein synthesis, or as a result of ribosome stalling. Functionally, catalyzes the release of premature peptidyl moieties from peptidyl-tRNA molecules trapped in stalled 50S ribosomal subunits, and thus maintains levels of free tRNAs and 50S ribosomes. The chain is Peptidyl-tRNA hydrolase from Xanthobacter autotrophicus (strain ATCC BAA-1158 / Py2).